A 73-amino-acid polypeptide reads, in one-letter code: Translation initiation factor IF-1 1 (73 aa).

In terms of domain architecture, S1-like spans 1-72 (MAKEELIEFG…TKGRINFRHK (72 aa)).

The protein belongs to the IF-1 family. Component of the 30S ribosomal translation pre-initiation complex which assembles on the 30S ribosome in the order IF-2 and IF-3, IF-1 and N-formylmethionyl-tRNA(fMet); mRNA recruitment can occur at any time during PIC assembly.

The protein localises to the cytoplasm. Its function is as follows. One of the essential components for the initiation of protein synthesis. Stabilizes the binding of IF-2 and IF-3 on the 30S subunit to which N-formylmethionyl-tRNA(fMet) subsequently binds. Helps modulate mRNA selection, yielding the 30S pre-initiation complex (PIC). Upon addition of the 50S ribosomal subunit IF-1, IF-2 and IF-3 are released leaving the mature 70S translation initiation complex. The polypeptide is Translation initiation factor IF-1 1 (Cupriavidus metallidurans (strain ATCC 43123 / DSM 2839 / NBRC 102507 / CH34) (Ralstonia metallidurans)).